We begin with the raw amino-acid sequence, 296 residues long: tRNA pseudouridine synthase B (296 aa).

Catalysis depends on Asp-38, which acts as the Nucleophile.

This sequence belongs to the pseudouridine synthase TruB family. Type 1 subfamily.

It carries out the reaction uridine(55) in tRNA = pseudouridine(55) in tRNA. Functionally, responsible for synthesis of pseudouridine from uracil-55 in the psi GC loop of transfer RNAs. This Synechocystis sp. (strain ATCC 27184 / PCC 6803 / Kazusa) protein is tRNA pseudouridine synthase B.